The chain runs to 502 residues: Sulfate adenylyltransferase (502 aa).

Residues 1–167 (MPSPHGGVLQ…LEAIQLPVHY (167 aa)) form an N-terminal region. The tract at residues 168 to 393 (DYPGWRKTPA…LRESNPSRPK (226 aa)) is catalytic. Residue glutamine 195 participates in sulfate binding. ATP is bound by residues 195–198 (QTRN) and 289–292 (GRDH). Residues threonine 196, arginine 197, and asparagine 198 contribute to the active site. Arginine 197 provides a ligand contact to sulfate. Alanine 293 lines the sulfate pocket. Residue valine 331 participates in ATP binding. The segment at 394-502 (QGFALVLSET…FLEDQGFFQF (109 aa)) is required for oligomerization; adenylyl-sulfate kinase-like.

Belongs to the sulfate adenylyltransferase family. In terms of assembly, homohexamer. Dimer of trimers.

It localises to the cytoplasm. It carries out the reaction sulfate + ATP + H(+) = adenosine 5'-phosphosulfate + diphosphate. Its pathway is sulfur metabolism; hydrogen sulfide biosynthesis; sulfite from sulfate: step 1/3. Catalyzes the first intracellular reaction of sulfate assimilation, forming adenosine-5'-phosphosulfate (APS) from inorganic sulfate and ATP. Plays an important role in sulfate activation as a component of the biosynthesis pathway of sulfur-containing amino acids. This Kluyveromyces lactis (strain ATCC 8585 / CBS 2359 / DSM 70799 / NBRC 1267 / NRRL Y-1140 / WM37) (Yeast) protein is Sulfate adenylyltransferase.